The following is a 60-amino-acid chain: MGIEQLSCPACGATFEMGLPRDVTVQSVTTEDREEPDDDRVKVRPNACSNGHECYVMFRF.

The C4-type; atypical zinc finger occupies C8–H52.

Belongs to the Brz family.

Activates transcription of bacteriorhodopsin (bop) and phytoene synthase (crtB1). May interact with DNA or RNA via the zinc finger motif. The polypeptide is Transcriptional regulator Brz (brz) (Halorhabdus utahensis (strain DSM 12940 / JCM 11049 / AX-2)).